A 521-amino-acid polypeptide reads, in one-letter code: Probable rhamnogalacturonase B (521 aa).

A signal peptide spans 1–21 (MRLHAFTLLSLLGLVPSFAAA). An intrachain disulfide couples C42 to C68. N-linked (GlcNAc...) asparagine glycosylation is present at N145. D219 functions as the Proton donor in the catalytic mechanism. The cysteines at positions 221 and 238 are disulfide-linked. N-linked (GlcNAc...) asparagine glycosylation is present at N239. The active site involves H294. N321 carries N-linked (GlcNAc...) asparagine glycosylation. 2 disulfides stabilise this stretch: C344–C350 and C372–C381. The disordered stretch occupies residues 462–521 (ETPAAASRSEQVVQGAPQETGQSAPESAGPVPSGNPGPVPTGGSRPSRHRHGHHHFGSAI). Residues 469 to 486 (RSEQVVQGAPQETGQSAP) are compositionally biased toward polar residues. The span at 507 to 521 (PSRHRHGHHHFGSAI) shows a compositional bias: basic residues.

Belongs to the glycosyl hydrolase 28 family.

Its subcellular location is the secreted. The catalysed reaction is Endohydrolysis of alpha-D-GalA-(1-&gt;2)-alpha-L-Rha glycosidic bond in the rhamnogalacturonan I backbone with initial inversion of anomeric configuration releasing oligosaccharides with beta-D-GalA at the reducing end.. In terms of biological role, pectinolytic enzymes consist of four classes of enzymes: pectine lyase, polygalacturonase, pectin methylesterase and rhamnogalacturonase. Hydrolyzes alpha-D-galacturonopyranosyl-(1,2)-alpha-L-rhamnopyranosyl linkages in the backbone of the hairy regions of pectins. This Aspergillus fumigatus (strain CBS 144.89 / FGSC A1163 / CEA10) (Neosartorya fumigata) protein is Probable rhamnogalacturonase B (rhgB).